The sequence spans 247 residues: OCIA domain-containing protein 1 (247 aa).

Positions 1 to 112 (MNGRADFREP…KKLENSPLGE (112 aa)) constitute an OCIA domain. Serine 108, serine 116, and serine 123 each carry phosphoserine. Disordered stretches follow at residues 113 to 153 (ALRS…ADNI) and 167 to 230 (SASM…MQER). Composition is skewed to polar residues over residues 136 to 146 (SNVSGQSSFGT) and 168 to 177 (ASMNESTPTG). Composition is skewed to basic and acidic residues over residues 192-210 (ESPKRKGVTYEELRSKNRE) and 218-230 (HKTDPSVRPMQER). Residue serine 193 is modified to Phosphoserine.

The protein belongs to the OCIAD1 family. Interacts with OCIAD2. Interacts with STAT3. Expressed at high levels in the brain and at lower levels in the heart, ovary, testis and kidney. Expression is strongest in embryonic stem cells and in the blood vessels.

It localises to the endosome. Its function is as follows. Maintains stem cell potency. Increases STAT3 phosphorylation and controls ERK phosphorylation. May act as a scaffold, increasing STAT3 recruitment onto endosomes. This is OCIA domain-containing protein 1 from Mus musculus (Mouse).